A 381-amino-acid chain; its full sequence is KRR1 small subunit processome component homolog (381 aa).

Positions 1–51 are disordered; sequence MASPSLERPEKGAGKSEFRNQKPKPENQDESELLTVPDGWKEPAFSKEDNP. Ala2 is modified (N-acetylalanine). Phosphoserine is present on residues Ser3 and Ser5. Composition is skewed to basic and acidic residues over residues 7 to 27 and 39 to 51; these read ERPE…KPEN and GWKE…EDNP. Residue Lys24 forms a Glycyl lysine isopeptide (Lys-Gly) (interchain with G-Cter in SUMO2) linkage. One can recognise a KH domain in the interval 154-206; that stretch reads KERFVKRRQRLIGPKGSTLKALELLTNCYIMVQGNTVSAIGPFSGLKEVRKVV. Residues 250–262 are compositionally biased toward basic residues; it reads NVNKRKEPKKKTV. 2 disordered regions span residues 250-278 and 309-338; these read NVNK…ESQI and AISK…ASTE. Residues Lys340 and Lys369 each participate in a glycyl lysine isopeptide (Lys-Gly) (interchain with G-Cter in SUMO2) cross-link.

It belongs to the KRR1 family. As to quaternary structure, part of the small subunit (SSU) processome, composed of more than 70 proteins and the RNA chaperone small nucleolar RNA (snoRNA) U3. (Microbial infection) Directly interacts with HIV-1 protein VPR. Also identified in a complex with NR3C1 and HIV-1 protein VPR.

It is found in the nucleus. The protein resides in the nucleolus. It localises to the cytoplasm. Functionally, part of the small subunit (SSU) processome, first precursor of the small eukaryotic ribosomal subunit. During the assembly of the SSU processome in the nucleolus, many ribosome biogenesis factors, an RNA chaperone and ribosomal proteins associate with the nascent pre-rRNA and work in concert to generate RNA folding, modifications, rearrangements and cleavage as well as targeted degradation of pre-ribosomal RNA by the RNA exosome. The polypeptide is KRR1 small subunit processome component homolog (Homo sapiens (Human)).